A 1119-amino-acid polypeptide reads, in one-letter code: Leucine-rich repeats and immunoglobulin-like domains protein 3 (1119 aa).

The signal sequence occupies residues 1 to 24 (MSAPSLRARAAGLGLLLCAVLGRA). An LRRNT domain is found at 38–74 (PSGVAAERPCPTTCRCLGDLLDCSRKRLARLPEPLPS). 15 LRR repeats span residues 75–96 (WVAR…SMSH), 99–120 (SLRE…GPVS), 122–142 (NITL…EHLK), 146–167 (SLET…FPAL), 168–189 (QLKY…YFDN), 193–214 (TLLV…MFKL), 216–237 (QLQH…TFQG), 240–261 (ALKS…AFWG), 264–285 (NMEI…WLYG), 288–309 (MLQE…AWEF), 312–333 (KLSE…SFLG), 336–357 (LLNT…AFRG), 360–382 (SLKT…NGAF), 387–408 (KLRR…AFTG), and 411–432 (ALEH…AFSQ). N-linked (GlcNAc...) asparagine glycans are attached at residues N122 and N156. N-linked (GlcNAc...) asparagine glycosylation occurs at N274. N-linked (GlcNAc...) asparagine glycosylation is found at N442, N469, and N515. The 52-residue stretch at 444 to 495 (SSLLCDCQLKWLPQWVAENNFQSFVNASCAHPQLLKGRSIFAVSPDGFVCDD) folds into the LRRCT domain. 3 Ig-like C2-type domains span residues 499-598 (PQIT…AKLT), 603-692 (PSFT…ATLT), and 697-783 (PSFL…VRLS). 2 disulfides stabilise this stretch: C520-C581 and C624-C676. N-linked (GlcNAc...) asparagine glycosylation is found at N688 and N729. A disulfide bridge links C718 with C767. Residues 810–830 (VVIIAVVCCVVGTSLVWVVII) form a helical membrane-spanning segment. N-linked (GlcNAc...) asparagine glycans are attached at residues N905, N987, N999, and N1016. The interval 1073–1093 (SSPDLDSGSEEDGKERTDFQE) is disordered. Positions 1083 to 1093 (EDGKERTDFQE) are enriched in basic and acidic residues.

In terms of assembly, interacts with EGFR, ERBB2 and ERBB4 (in vitro). In terms of tissue distribution, widely expressed.

Its subcellular location is the cell membrane. The protein resides in the cytoplasmic vesicle membrane. May play a role in craniofacial and inner ear morphogenesis during embryonic development. May act within the otic vesicle epithelium to control formation of the lateral semicircular canal in the inner ear, possibly by restricting the expression of NTN1. This Homo sapiens (Human) protein is Leucine-rich repeats and immunoglobulin-like domains protein 3 (LRIG3).